The following is a 193-amino-acid chain: Holliday junction branch migration complex subunit RuvA (193 aa).

Residues 1-64 (MIGRIAGILL…EDANLLYGFL (64 aa)) are domain I. The domain II stretch occupies residues 65–139 (TPQERTTFRE…GKLGADLGEL (75 aa)). Residues 139 to 143 (LAGAA) form a flexible linker region. The segment at 144-193 (SPSDHATDILNALLALGYSEKEGLAAIKNVPAGTGVSEGIKLALKALSKV) is domain III.

Belongs to the RuvA family. As to quaternary structure, homotetramer. Forms an RuvA(8)-RuvB(12)-Holliday junction (HJ) complex. HJ DNA is sandwiched between 2 RuvA tetramers; dsDNA enters through RuvA and exits via RuvB. An RuvB hexamer assembles on each DNA strand where it exits the tetramer. Each RuvB hexamer is contacted by two RuvA subunits (via domain III) on 2 adjacent RuvB subunits; this complex drives branch migration. In the full resolvosome a probable DNA-RuvA(4)-RuvB(12)-RuvC(2) complex forms which resolves the HJ.

The protein localises to the cytoplasm. In terms of biological role, the RuvA-RuvB-RuvC complex processes Holliday junction (HJ) DNA during genetic recombination and DNA repair, while the RuvA-RuvB complex plays an important role in the rescue of blocked DNA replication forks via replication fork reversal (RFR). RuvA specifically binds to HJ cruciform DNA, conferring on it an open structure. The RuvB hexamer acts as an ATP-dependent pump, pulling dsDNA into and through the RuvAB complex. HJ branch migration allows RuvC to scan DNA until it finds its consensus sequence, where it cleaves and resolves the cruciform DNA. This is Holliday junction branch migration complex subunit RuvA from Burkholderia lata (strain ATCC 17760 / DSM 23089 / LMG 22485 / NCIMB 9086 / R18194 / 383).